We begin with the raw amino-acid sequence, 187 residues long: Elongation factor P (187 aa).

The protein belongs to the elongation factor P family.

Its subcellular location is the cytoplasm. Its pathway is protein biosynthesis; polypeptide chain elongation. Functionally, involved in peptide bond synthesis. Stimulates efficient translation and peptide-bond synthesis on native or reconstituted 70S ribosomes in vitro. Probably functions indirectly by altering the affinity of the ribosome for aminoacyl-tRNA, thus increasing their reactivity as acceptors for peptidyl transferase. This Arthrobacter sp. (strain FB24) protein is Elongation factor P.